Reading from the N-terminus, the 337-residue chain is tRNA N6-adenosine threonylcarbamoyltransferase (337 aa).

The Fe cation site is built by histidine 110 and histidine 114. Substrate-binding positions include 132–136 (VVSGG), aspartate 165, glycine 178, aspartate 182, and asparagine 268. Aspartate 293 lines the Fe cation pocket.

It belongs to the KAE1 / TsaD family. It depends on Fe(2+) as a cofactor.

Its subcellular location is the cytoplasm. It carries out the reaction L-threonylcarbamoyladenylate + adenosine(37) in tRNA = N(6)-L-threonylcarbamoyladenosine(37) in tRNA + AMP + H(+). In terms of biological role, required for the formation of a threonylcarbamoyl group on adenosine at position 37 (t(6)A37) in tRNAs that read codons beginning with adenine. Is involved in the transfer of the threonylcarbamoyl moiety of threonylcarbamoyl-AMP (TC-AMP) to the N6 group of A37, together with TsaE and TsaB. TsaD likely plays a direct catalytic role in this reaction. The sequence is that of tRNA N6-adenosine threonylcarbamoyltransferase from Sulfurihydrogenibium sp. (strain YO3AOP1).